Here is a 93-residue protein sequence, read N- to C-terminus: uncharacterized protein (93 aa).

2 helical membrane-spanning segments follow: residues 8 to 28 and 54 to 74; these read FIGIVKDILVLIASFGILLAS and ACFLIFIALGETLLAFVYLIL.

The protein localises to the cell membrane. This is an uncharacterized protein from Methanocaldococcus jannaschii (strain ATCC 43067 / DSM 2661 / JAL-1 / JCM 10045 / NBRC 100440) (Methanococcus jannaschii).